A 132-amino-acid chain; its full sequence is Fluoride-specific ion channel FluC (132 aa).

Transmembrane regions (helical) follow at residues 5–25 (LVAIGAGAALGANLRWLLGMW), 36–56 (GTLAANWLGAWLIGIAIALFA), 68–88 (FVVTGFLGALTTFSTFSAEMF), and 103–123 (IAVHVAGSLAMTGLGIATFGA). The Na(+) site is built by Gly75 and Thr78.

It belongs to the fluoride channel Fluc/FEX (TC 1.A.43) family.

The protein localises to the cell inner membrane. The catalysed reaction is fluoride(in) = fluoride(out). Na(+) is not transported, but it plays an essential structural role and its presence is essential for fluoride channel function. In terms of biological role, fluoride-specific ion channel. Important for reducing fluoride concentration in the cell, thus reducing its toxicity. The polypeptide is Fluoride-specific ion channel FluC (Chromohalobacter salexigens (strain ATCC BAA-138 / DSM 3043 / CIP 106854 / NCIMB 13768 / 1H11)).